The chain runs to 159 residues: Protein-export protein SecB (159 aa).

It belongs to the SecB family. In terms of assembly, homotetramer, a dimer of dimers. One homotetramer interacts with 1 SecA dimer.

The protein resides in the cytoplasm. Functionally, one of the proteins required for the normal export of preproteins out of the cell cytoplasm. It is a molecular chaperone that binds to a subset of precursor proteins, maintaining them in a translocation-competent state. It also specifically binds to its receptor SecA. The chain is Protein-export protein SecB from Marinomonas sp. (strain MWYL1).